Here is a 415-residue protein sequence, read N- to C-terminus: MSLQAPKGTKDLLPTESYKWQYLENKFRNIAADFGCREIRTPVFEYTELFQRGVGETTDVVQKEMYTFEDKAGRSITLKPEGTSPAVRAFVEGRLFNETQPTKMYYFTPVMRYENVQKGRLRQHHQFGIEIFGAKDASVDAEVISIPVGIYKELGVEGVELNINSIGCPKCRKTYNEALKKYLSKNYDKLCSTCKTRFDKNPLRILDCKVDTCKEIVKDAPIILDYICDECRDHFEALKSYLDVLDIKYKVDPFIVRGLDYYSKTVFEFIIDDITICAGGRYDYLIEEIGGPSMPAVGFGMGIERLLLTLQEKAIEIPEEAYVDLYLGNMGDKAKLEVLKLAKELRDRHIKCEIDHMGKSVKAQMKYANKIGAKYSMVLGEEELNTGKVALKRMEDGQQIEVDIKEIDTLIKVFK.

This sequence belongs to the class-II aminoacyl-tRNA synthetase family. In terms of assembly, homodimer.

The protein resides in the cytoplasm. The enzyme catalyses tRNA(His) + L-histidine + ATP = L-histidyl-tRNA(His) + AMP + diphosphate + H(+). The polypeptide is Histidine--tRNA ligase (Clostridium botulinum (strain Loch Maree / Type A3)).